We begin with the raw amino-acid sequence, 299 residues long: Tyrosine recombinase XerC (299 aa).

The Core-binding (CB) domain occupies 1 to 85 (MEQHLDAYCM…AVRGFYKYLN (85 aa)). Positions 106-285 (RLPKTLDTDR…DFQHLATVYD (180 aa)) constitute a Tyr recombinase domain. Residues Arg-146, Lys-170, His-237, Arg-240, and His-263 contribute to the active site. Tyr-272 functions as the O-(3'-phospho-DNA)-tyrosine intermediate in the catalytic mechanism.

This sequence belongs to the 'phage' integrase family. XerC subfamily. In terms of assembly, forms a cyclic heterotetrameric complex composed of two molecules of XerC and two molecules of XerD.

The protein localises to the cytoplasm. Functionally, site-specific tyrosine recombinase, which acts by catalyzing the cutting and rejoining of the recombining DNA molecules. The XerC-XerD complex is essential to convert dimers of the bacterial chromosome into monomers to permit their segregation at cell division. It also contributes to the segregational stability of plasmids. This chain is Tyrosine recombinase XerC, found in Pseudomonas syringae pv. tomato (strain ATCC BAA-871 / DC3000).